The chain runs to 515 residues: Bifunctional purine biosynthesis protein PurH (515 aa).

Positions 1–145 (MTKRALISVS…KNHASVTVVV (145 aa)) constitute an MGS-like domain.

This sequence belongs to the PurH family.

The enzyme catalyses (6R)-10-formyltetrahydrofolate + 5-amino-1-(5-phospho-beta-D-ribosyl)imidazole-4-carboxamide = 5-formamido-1-(5-phospho-D-ribosyl)imidazole-4-carboxamide + (6S)-5,6,7,8-tetrahydrofolate. It carries out the reaction IMP + H2O = 5-formamido-1-(5-phospho-D-ribosyl)imidazole-4-carboxamide. The protein operates within purine metabolism; IMP biosynthesis via de novo pathway; 5-formamido-1-(5-phospho-D-ribosyl)imidazole-4-carboxamide from 5-amino-1-(5-phospho-D-ribosyl)imidazole-4-carboxamide (10-formyl THF route): step 1/1. Its pathway is purine metabolism; IMP biosynthesis via de novo pathway; IMP from 5-formamido-1-(5-phospho-D-ribosyl)imidazole-4-carboxamide: step 1/1. The polypeptide is Bifunctional purine biosynthesis protein PurH (Streptococcus pyogenes serotype M2 (strain MGAS10270)).